The following is a 509-amino-acid chain: Heat shock 70 kDa protein 14 (509 aa).

It belongs to the heat shock protein 70 family. As to quaternary structure, component of ribosome-associated complex (RAC), a heterodimer composed of Hsp70/DnaK-type chaperone HSPA14 and Hsp40/DnaJ-type chaperone DNAJC2.

It is found in the cytoplasm. Its subcellular location is the cytosol. In terms of biological role, component of the ribosome-associated complex (RAC), a complex involved in folding or maintaining nascent polypeptides in a folding-competent state. In the RAC complex, binds to the nascent polypeptide chain, while DNAJC2 stimulates its ATPase activity. The polypeptide is Heat shock 70 kDa protein 14 (HSPA14) (Bos taurus (Bovine)).